The sequence spans 70 residues: Large ribosomal subunit protein bL31 (70 aa).

Residues Cys-16, Cys-18, Cys-37, and Cys-40 each coordinate Zn(2+).

This sequence belongs to the bacterial ribosomal protein bL31 family. Type A subfamily. In terms of assembly, part of the 50S ribosomal subunit. Zn(2+) is required as a cofactor.

Binds the 23S rRNA. The protein is Large ribosomal subunit protein bL31 of Haemophilus influenzae (strain 86-028NP).